Consider the following 254-residue polypeptide: Glutamate racemase (254 aa).

Substrate is bound by residues 10–11 and 42–43; these read DS and YG. Cysteine 73 functions as the Proton donor/acceptor in the catalytic mechanism. 74–75 is a substrate binding site; it reads NT. Catalysis depends on cysteine 183, which acts as the Proton donor/acceptor. 184-185 is a binding site for substrate; sequence TH.

The protein belongs to the aspartate/glutamate racemases family.

The enzyme catalyses L-glutamate = D-glutamate. It participates in cell wall biogenesis; peptidoglycan biosynthesis. Its function is as follows. Provides the (R)-glutamate required for cell wall biosynthesis. This is Glutamate racemase from Herpetosiphon aurantiacus (strain ATCC 23779 / DSM 785 / 114-95).